The sequence spans 272 residues: Sulfate transporter CysZ (272 aa).

Helical transmembrane passes span 29–49, 66–86, 148–168, and 219–239; these read FVIMPIVLNTVLLCGLFWLFI, WLSFLSVILLILSILTILLLF, IIALFLLSFIPLVGQTIVPVL, and FVPVINLLIMPVAVCGATLMW.

This sequence belongs to the CysZ family.

The protein localises to the cell inner membrane. In terms of biological role, high affinity, high specificity proton-dependent sulfate transporter, which mediates sulfate uptake. Provides the sulfur source for the cysteine synthesis pathway. This Haemophilus influenzae (strain ATCC 51907 / DSM 11121 / KW20 / Rd) protein is Sulfate transporter CysZ.